The primary structure comprises 396 residues: Obg-like ATPase 1 (396 aa).

The region spanning 23 to 283 is the OBG-type G domain; the sequence is LKIGIVGLPN…LSAEERQKYL (261 aa). 32–37 is an ATP binding site; sequence NVGKST. Mg(2+) contacts are provided by serine 36 and threonine 56. An ATP-binding site is contributed by leucine 231. The short motif at 267–274 is the Nuclear export signal element; the sequence is LELRLQEL. Lysine 294 is modified (N6-acetyllysine). The TGS domain occupies 304 to 387; that stretch reads QLEYFFTAGP…EDGDIIFFKF (84 aa).

Belongs to the TRAFAC class OBG-HflX-like GTPase superfamily. OBG GTPase family. YchF/OLA1 subfamily. In terms of assembly, monomer. Mg(2+) is required as a cofactor.

The protein resides in the cytoplasm. It is found in the nucleus. It localises to the nucleolus. In terms of biological role, hydrolyzes ATP, and can also hydrolyze GTP with lower efficiency. Has lower affinity for GTP. The sequence is that of Obg-like ATPase 1 from Bos taurus (Bovine).